Consider the following 298-residue polypeptide: GTPase Era (298 aa).

The Era-type G domain maps to 3-170 (KSGFVAILGR…VQLLKDNLEE (168 aa)). Residues 11 to 18 (GRPNVGKS) form a G1 region. GTP is bound at residue 11 to 18 (GRPNVGKS). Positions 37-41 (QSTRN) are G2. A G3 region spans residues 58-61 (DTPG). GTP-binding positions include 58 to 62 (DTPGI) and 120 to 123 (NKID). A G4 region spans residues 120–123 (NKID). A G5 region spans residues 149 to 151 (ISA). The KH type-2 domain maps to 201–279 (TQQEVPHSVA…YLETWVKVKK (79 aa)).

This sequence belongs to the TRAFAC class TrmE-Era-EngA-EngB-Septin-like GTPase superfamily. Era GTPase family. As to quaternary structure, monomer.

It localises to the cytoplasm. Its subcellular location is the cell membrane. In terms of biological role, an essential GTPase that binds both GDP and GTP, with rapid nucleotide exchange. Plays a role in 16S rRNA processing and 30S ribosomal subunit biogenesis and possibly also in cell cycle regulation and energy metabolism. The protein is GTPase Era of Streptococcus equi subsp. zooepidemicus (strain H70).